The primary structure comprises 682 residues: Potassium-transporting ATPase ATP-binding subunit (682 aa).

A run of 4 helical transmembrane segments spans residues 34–54 (PVMF…IAMA), 62–82 (ALFS…ANFA), 219–239 (IALT…TATL), and 254–274 (VLVA…LSAI). Catalysis depends on Asp307, which acts as the 4-aspartylphosphate intermediate. ATP contacts are provided by residues Asp344, Glu348, 377-384 (FTAQSRMS), and Lys395. Mg(2+) contacts are provided by Asp518 and Asp522. A run of 3 helical transmembrane segments spans residues 588 to 608 (FAII…LNIM), 616 to 636 (AILS…PLAL), and 656 to 676 (IYGL…DLLL).

It belongs to the cation transport ATPase (P-type) (TC 3.A.3) family. Type IA subfamily. The system is composed of three essential subunits: KdpA, KdpB and KdpC.

The protein resides in the cell inner membrane. The enzyme catalyses K(+)(out) + ATP + H2O = K(+)(in) + ADP + phosphate + H(+). Functionally, part of the high-affinity ATP-driven potassium transport (or Kdp) system, which catalyzes the hydrolysis of ATP coupled with the electrogenic transport of potassium into the cytoplasm. This subunit is responsible for energy coupling to the transport system and for the release of the potassium ions to the cytoplasm. The protein is Potassium-transporting ATPase ATP-binding subunit of Shigella boydii serotype 18 (strain CDC 3083-94 / BS512).